Here is a 116-residue protein sequence, read N- to C-terminus: Large ribosomal subunit protein bL17 (116 aa).

This sequence belongs to the bacterial ribosomal protein bL17 family. In terms of assembly, part of the 50S ribosomal subunit. Contacts proteins L3 and L32.

Functionally, binds to the 23S rRNA. The chain is Large ribosomal subunit protein bL17 from Deinococcus radiodurans (strain ATCC 13939 / DSM 20539 / JCM 16871 / CCUG 27074 / LMG 4051 / NBRC 15346 / NCIMB 9279 / VKM B-1422 / R1).